The sequence spans 294 residues: 33 kDa chaperonin (294 aa).

2 cysteine pairs are disulfide-bonded: Cys239–Cys241 and Cys272–Cys275.

The protein belongs to the HSP33 family. Under oxidizing conditions two disulfide bonds are formed involving the reactive cysteines. Under reducing conditions zinc is bound to the reactive cysteines and the protein is inactive.

It is found in the cytoplasm. Functionally, redox regulated molecular chaperone. Protects both thermally unfolding and oxidatively damaged proteins from irreversible aggregation. Plays an important role in the bacterial defense system toward oxidative stress. The polypeptide is 33 kDa chaperonin (Listeria monocytogenes serotype 4a (strain HCC23)).